The chain runs to 485 residues: NADH-quinone oxidoreductase subunit N (485 aa).

The next 14 helical transmembrane spans lie at 8–28 (LIAL…MLSI), 35–55 (FLNA…LWFV), 71–91 (GFAM…CTFA), 105–125 (FYLL…ANHL), 127–147 (SLFL…GYAF), 159–179 (YTIL…LVYA), 203–223 (LLAG…LVPF), 235–255 (PAPV…GVVM), 271–291 (VVLA…ALSQ), 297–317 (LLGY…IALQ), 326–346 (VGVY…VVSL), 373–393 (AAVM…LGFI), 408–430 (WWLV…RVAV), and 455–475 (IVVL…QPLI).

The protein belongs to the complex I subunit 2 family. In terms of assembly, NDH-1 is composed of 13 different subunits. Subunits NuoA, H, J, K, L, M, N constitute the membrane sector of the complex.

It localises to the cell inner membrane. It catalyses the reaction a quinone + NADH + 5 H(+)(in) = a quinol + NAD(+) + 4 H(+)(out). In terms of biological role, NDH-1 shuttles electrons from NADH, via FMN and iron-sulfur (Fe-S) centers, to quinones in the respiratory chain. The immediate electron acceptor for the enzyme in this species is believed to be ubiquinone. Couples the redox reaction to proton translocation (for every two electrons transferred, four hydrogen ions are translocated across the cytoplasmic membrane), and thus conserves the redox energy in a proton gradient. The protein is NADH-quinone oxidoreductase subunit N of Escherichia coli O81 (strain ED1a).